A 122-amino-acid chain; its full sequence is Guanine nucleotide exchange factor MSS4 homolog (122 aa).

One can recognise an MSS4 domain in the interval 9–120; that stretch reads EQITDGKNKS…YLALKRVVHK (112 aa). Zn(2+) contacts are provided by cysteine 22, cysteine 25, cysteine 92, and cysteine 95.

This sequence belongs to the DSS4/MSS4 family. As to quaternary structure, interacts with Rab8.

It localises to the basal cell membrane. Its function is as follows. Guanine-nucleotide-releasing protein that acts on members of the sec4/ypt1/rab subfamily such as Rab8. During egg development, essential for establishing and maintaining epithelial cell polarity by regulating the correct polarized deposition of basal membrane (BM) proteins such as trol/Pcan and vkg/Coll IV to the basal surface of follicular epithelial (FE) cells. Likely to function by restricting the activity of the vesicle transport regulator Rab8 to the basal membrane, and thus directs BM protein-containing vesicles to the basal side of the FE cells. This function is independent of the Crag/Rab10 regulation of polarized BM protein secretion in the FE. This is Guanine nucleotide exchange factor MSS4 homolog from Drosophila melanogaster (Fruit fly).